Here is a 140-residue protein sequence, read N- to C-terminus: Small ribosomal subunit protein uS19 (140 aa).

Belongs to the universal ribosomal protein uS19 family.

Its function is as follows. Protein S19 forms a complex with S13 that binds strongly to the 16S ribosomal RNA. This is Small ribosomal subunit protein uS19 from Natronomonas pharaonis (strain ATCC 35678 / DSM 2160 / CIP 103997 / JCM 8858 / NBRC 14720 / NCIMB 2260 / Gabara) (Halobacterium pharaonis).